The chain runs to 387 residues: Small ribosomal subunit biogenesis GTPase RsgA (387 aa).

In terms of domain architecture, CP-type G spans 112 to 273; it reads YDGLKPVAAN…LIDSPGVREF (162 aa). GTP-binding positions include 159–162 and 213–221; these read NKID and GQSGVGKSS. Residues Cys-297, Cys-302, His-304, and Cys-310 each contribute to the Zn(2+) site.

The protein belongs to the TRAFAC class YlqF/YawG GTPase family. RsgA subfamily. In terms of assembly, monomer. Associates with 30S ribosomal subunit, binds 16S rRNA. Zn(2+) is required as a cofactor.

Its subcellular location is the cytoplasm. In terms of biological role, one of several proteins that assist in the late maturation steps of the functional core of the 30S ribosomal subunit. Helps release RbfA from mature subunits. May play a role in the assembly of ribosomal proteins into the subunit. Circularly permuted GTPase that catalyzes slow GTP hydrolysis, GTPase activity is stimulated by the 30S ribosomal subunit. This chain is Small ribosomal subunit biogenesis GTPase RsgA, found in Vibrio cholerae serotype O1 (strain ATCC 39315 / El Tor Inaba N16961).